A 69-amino-acid chain; its full sequence is MGMALELYWLCGFRSYWPLGTNAENEGNRKENRRQMQSRNERGCNVRQTKTYRDREADRHIHGIACLLF.

The interval 23–46 is disordered; it reads AENEGNRKENRRQMQSRNERGCNV. Residues 26-44 show a composition bias toward basic and acidic residues; the sequence is EGNRKENRRQMQSRNERGC.

This is an uncharacterized protein from Homo sapiens (Human).